Here is a 668-residue protein sequence, read N- to C-terminus: Cyclin-dependent kinase 11.2 (668 aa).

Positions 1–265 (MSNYSTNGSR…EQWESMTENE (265 aa)) are disordered. 3 stretches are compositionally biased toward basic and acidic residues: residues 35–73 (KTKE…DHRD), 85–127 (YCRD…DSLR), and 140–163 (LPDD…KTVM). Residues 164-181 (EVEDVEMSPVEMLDEEEV) show a composition bias toward acidic residues. Basic and acidic residues-rich tracts occupy residues 197–212 (NEPE…DPES) and 245–265 (PDDK…TENE). The region spanning 304–600 (YVILNVIAEG…ASEALQHDWF (297 aa)) is the Protein kinase domain. ATP is bound by residues 310–318 (IAEGTYGEV) and Lys333. The active-site Proton acceptor is Asp432.

The protein belongs to the protein kinase superfamily. CMGC Ser/Thr protein kinase family. CDC2/CDKX subfamily. Expressed in somatic cells and at varying levels throughout the germline (at protein level). Highly expressed in the germ line of hermaphrodites (at protein level).

The protein localises to the nucleus. It is found in the cytoplasm. The enzyme catalyses L-seryl-[protein] + ATP = O-phospho-L-seryl-[protein] + ADP + H(+). It catalyses the reaction L-threonyl-[protein] + ATP = O-phospho-L-threonyl-[protein] + ADP + H(+). Its function is as follows. Probable cyclin-dependent kinase whose activity is most likely regulated by the cyclin cyl-1/Cylin-L. Acts partially redundantly with cdk-11.1 to ensure embryonic viability. In contrast to cdk-11.1, not essential for male and female fertility. This chain is Cyclin-dependent kinase 11.2, found in Caenorhabditis elegans.